A 116-amino-acid polypeptide reads, in one-letter code: L-amino-acid oxidase BjussuLAAO-II (116 aa).

Residue 42 to 45 coordinates FAD; sequence GPMR. Substrate is bound by residues arginine 45 and histidine 78.

It belongs to the flavin monoamine oxidase family. FIG1 subfamily. As to quaternary structure, homodimer; non-covalently linked. FAD is required as a cofactor. In terms of processing, glycosylated. Expressed by the venom gland.

It localises to the secreted. The enzyme catalyses an L-alpha-amino acid + O2 + H2O = a 2-oxocarboxylate + H2O2 + NH4(+). The catalysed reaction is L-leucine + O2 + H2O = 4-methyl-2-oxopentanoate + H2O2 + NH4(+). It catalyses the reaction L-phenylalanine + O2 + H2O = 3-phenylpyruvate + H2O2 + NH4(+). It carries out the reaction L-methionine + O2 + H2O = 4-methylsulfanyl-2-oxobutanoate + H2O2 + NH4(+). The enzyme catalyses L-isoleucine + O2 + H2O = (S)-3-methyl-2-oxopentanoate + H2O2 + NH4(+). The catalysed reaction is L-histidine + O2 + H2O = 3-(imidazol-5-yl)pyruvate + H2O2 + NH4(+). It catalyses the reaction L-tyrosine + O2 + H2O = 3-(4-hydroxyphenyl)pyruvate + H2O2 + NH4(+). It carries out the reaction L-tryptophan + O2 + H2O = indole-3-pyruvate + H2O2 + NH4(+). Its enzymatic activities is reduced by the presence of Zn(2+), Al(3+), Cu(2+), Na(+) or Ni(2+) salts. Its function is as follows. Catalyzes an oxidative deamination of predominantly hydrophobic and aromatic L-amino acids, thus producing hydrogen peroxide that may contribute to the diverse toxic effects of this enzyme. Shows very high enzymatic activity on L-Met and L-Leu, high activity on L-Ile, L-Phe and L-Tyr and moderate activity on L-His. Exhibits diverse biological activities, such as hemorrhage, hemolysis, edema, apoptosis of vascular endothelial cells or tumor cell lines, and antibacterial, as well as regulation of platelet aggregation. Effects of snake L-amino oxidases on platelets are controversial, since they either induce aggregation or inhibit agonist-induced aggregation. These different effects are probably due to different experimental conditions. In vitro, has a strong antiprotozoal effect against Leishmania amazonensis (IC(50)=4.56 ug/mL) and Trypanosoma cruzi (IC(50)=4.85 ug/mL). It also causes cell death and DNA damage in hepatocarcinoma cells (HepG2) in vitro by inducing oxidative stress. It exerts cytotoxicity towards colorectal adenocarcinomahuman cells (Caco-2) by acting on multiple intracellular targets. It diminishes cell viability by decreasing mitochondrial activity, the activity of acid phosphatases, and lysosomal function. In addition, it increases intracellular levels of reactive oxygen species and DNA damage, it elevates the expression of the pro-inflammatory cytokine genes TNF and IL6, and lowers the expression of the apoptotic-related genes. Also induces cytotoxicity (IC(50)=1.80 ug/mL) and apoptosis in MCF-7 cells (a human breast adeno-carcinoma cell line) by activating the intrinsic and extrinsic apoptosis pathways, but are not cytotoxic towards MCF-10A cells (a non-tumorigenic human breast epithelial cell line). The chain is L-amino-acid oxidase BjussuLAAO-II from Bothrops jararacussu (Jararacussu).